Here is a 264-residue protein sequence, read N- to C-terminus: Acyl-[acyl-carrier-protein]--UDP-N-acetylglucosamine O-acyltransferase (264 aa).

Belongs to the transferase hexapeptide repeat family. LpxA subfamily. Homotrimer.

It localises to the cytoplasm. The catalysed reaction is a (3R)-hydroxyacyl-[ACP] + UDP-N-acetyl-alpha-D-glucosamine = a UDP-3-O-[(3R)-3-hydroxyacyl]-N-acetyl-alpha-D-glucosamine + holo-[ACP]. It participates in glycolipid biosynthesis; lipid IV(A) biosynthesis; lipid IV(A) from (3R)-3-hydroxytetradecanoyl-[acyl-carrier-protein] and UDP-N-acetyl-alpha-D-glucosamine: step 1/6. Involved in the biosynthesis of lipid A, a phosphorylated glycolipid that anchors the lipopolysaccharide to the outer membrane of the cell. This is Acyl-[acyl-carrier-protein]--UDP-N-acetylglucosamine O-acyltransferase from Actinobacillus pleuropneumoniae serotype 7 (strain AP76).